The chain runs to 485 residues: Podocalyxin (485 aa).

An N-terminal signal peptide occupies residues 1–24; that stretch reads MRPTLALSALLLLQLLLLSTPSLS. The segment at 22-267 is disordered; it reads SLSQDNGNKT…STPSSTWTSG (246 aa). The Extracellular portion of the chain corresponds to 25–386; it reads QDNGNKTDTS…PPEVNEDRFS (362 aa). Positions 26-57 are enriched in polar residues; that stretch reads DNGNKTDTSDITSIDQNQDKPATNQPSNATPK. N-linked (GlcNAc...) asparagine glycans are attached at residues asparagine 29 and asparagine 82. Low complexity predominate over residues 58–109; sequence SSVQPPTPTSISTSSPDPKATQSSNSSVTTTSDSTTDRTSSSTSTVPTTSNS. Composition is skewed to polar residues over residues 110 to 128 and 135 to 149; these read GQTVSSGGKSSDKITTALP and NASSQPTDLNTSTKL. N-linked (GlcNAc...) asparagine glycans are attached at residues asparagine 135, asparagine 144, and asparagine 156. Over residues 150–161 the composition is skewed to low complexity; the sequence is PSTPTTNSTASP. Composition is skewed to polar residues over residues 163-176, 186-228, and 235-253; these read QPVSHSEGQHTTVQ, DNTT…QPTG, and SVPTTEEFTHSTSSWTPVV. Asparagine 187 carries N-linked (GlcNAc...) asparagine glycosylation. Residues 254 to 267 show a composition bias toward low complexity; it reads SQGPSTPSSTWTSG. Asparagine 287 is a glycosylation site (N-linked (GlcNAc...) asparagine). The helical transmembrane segment at 387 to 407 threads the bilayer; it reads LPLIITIVCMASFLLLVAALY. The Cytoplasmic portion of the chain corresponds to 408-485; that stretch reads GCCHQRISQR…DLDEEEDTHL (78 aa). The residue at position 445 (threonine 445) is a Phosphothreonine. A Phosphoserine modification is found at serine 464. Threonine 483 carries the phosphothreonine modification.

It belongs to the podocalyxin family. Monomer; when associated with the membrane raft. Oligomer; when integrated in the apical membrane. Interacts with NHERF2. Interacts (via the C-terminal PDZ-binding motif DTHL) with NHERF1 (via the PDZ domains); the interaction take place early in the secretory pathway and is necessary for its apical membrane sorting. Found in a complex with EZR, PODXL and NHERF2. Associates with the actin cytoskeleton through complex formation with EZR and NHERF2. Interacts (via the C-terminal PDZ-binding motif DTHL) with NHERF1 (via the PDZ domains); interaction is not detected in glomerular epithelium cells. Interacts (via the C-terminal PDZ-binding motif DTHL) with NHERF2 (via the PDZ 1 domain); interaction is detected in glomerular epithelium cells. Interacts with EZR. Post-translationally, N- and O-linked glycosylated. Sialoglycoprotein. As to expression, glomerular epithelium cell (podocyte) (at protein level).

Its subcellular location is the apical cell membrane. It localises to the cell projection. The protein localises to the microvillus. The protein resides in the membrane raft. It is found in the lamellipodium. Its subcellular location is the filopodium. It localises to the ruffle. The protein localises to the membrane. Involved in the regulation of both adhesion and cell morphology and cancer progression. Functions as an anti-adhesive molecule that maintains an open filtration pathway between neighboring foot processes in the podocyte by charge repulsion. Acts as a pro-adhesive molecule, enhancing the adherence of cells to immobilized ligands, increasing the rate of migration and cell-cell contacts in an integrin-dependent manner. Induces the formation of apical actin-dependent microvilli. Involved in the formation of a preapical plasma membrane subdomain to set up initial epithelial polarization and the apical lumen formation during renal tubulogenesis. Plays a role in cancer development and aggressiveness by inducing cell migration and invasion through its interaction with the actin-binding protein EZR. Affects EZR-dependent signaling events, leading to increased activities of the MAPK and PI3K pathways in cancer cells. This is Podocalyxin (Podxl) from Rattus norvegicus (Rat).